Here is a 241-residue protein sequence, read N- to C-terminus: 3-oxoacyl-[acyl-carrier-protein] reductase FabG (241 aa).

NADP(+)-binding positions include 13 to 16 (GASG), S38, 57 to 58 (EV), and N83. S135 lines the substrate pocket. The active-site Proton acceptor is Y148. NADP(+) contacts are provided by residues 148 to 152 (YCASK) and I181.

The protein belongs to the short-chain dehydrogenases/reductases (SDR) family. As to quaternary structure, homotetramer.

The catalysed reaction is a (3R)-hydroxyacyl-[ACP] + NADP(+) = a 3-oxoacyl-[ACP] + NADPH + H(+). It functions in the pathway lipid metabolism; fatty acid biosynthesis. Its function is as follows. Catalyzes the NADPH-dependent reduction of beta-ketoacyl-ACP substrates to beta-hydroxyacyl-ACP products, the first reductive step in the elongation cycle of fatty acid biosynthesis. This is 3-oxoacyl-[acyl-carrier-protein] reductase FabG (fabG) from Rickettsia conorii (strain ATCC VR-613 / Malish 7).